The following is a 180-amino-acid chain: Formate hydrogenlyase subunit 6 (180 aa).

2 consecutive 4Fe-4S ferredoxin-type domains span residues 31 to 60 (GKPE…VETD) and 66 to 95 (LAWE…LSQE). Positions 40, 43, 46, 50, 75, 78, 81, and 85 each coordinate [4Fe-4S] cluster.

As to quaternary structure, FHL comprises of a formate dehydrogenase, unidentified electron carriers and a hydrogenase (isoenzyme 3). In this non-energy conserving pathway, molecular hydrogen and carbodioxide are released from formate.

Probable electron transfer protein for hydrogenase 3. The chain is Formate hydrogenlyase subunit 6 (hycF) from Escherichia coli (strain K12).